The following is a 191-amino-acid chain: Ribonuclease HII (191 aa).

One can recognise an RNase H type-2 domain in the interval 16–191; that stretch reads INLIGIDEAG…KLHRKSFKLL (176 aa). 3 residues coordinate a divalent metal cation: D22, E23, and D110.

Belongs to the RNase HII family. It depends on Mn(2+) as a cofactor. Mg(2+) is required as a cofactor.

It is found in the cytoplasm. It catalyses the reaction Endonucleolytic cleavage to 5'-phosphomonoester.. Endonuclease that specifically degrades the RNA of RNA-DNA hybrids. In Campylobacter jejuni subsp. jejuni serotype O:6 (strain 81116 / NCTC 11828), this protein is Ribonuclease HII.